Consider the following 540-residue polypeptide: CTP synthase (540 aa).

Residues 1–267 are amidoligase domain; sequence MKIMKFIFIT…GKLVTKKLNL (267 aa). Ser-15 provides a ligand contact to CTP. Ser-15 lines the UTP pocket. Residue 16-21 participates in ATP binding; the sequence is SLGKGI. Residue Tyr-56 coordinates L-glutamine. Asp-73 contacts ATP. Mg(2+)-binding residues include Asp-73 and Glu-141. CTP is bound by residues 148–150, 188–193, and Lys-224; these read DIE and KTKPTQ. UTP is bound by residues 188–193 and Lys-224; that span reads KTKPTQ. 240–242 provides a ligand contact to ATP; the sequence is RDA. The 249-residue stretch at 292–540 folds into the Glutamine amidotransferase type-1 domain; it reads TIGIVGKYVE…VRASLGEKIK (249 aa). Gly-360 is an L-glutamine binding site. The active-site Nucleophile; for glutamine hydrolysis is Cys-387. Residues 388–391, Glu-411, and Arg-468 contribute to the L-glutamine site; that span reads MGMQ. Active-site residues include His-513 and Glu-515.

The protein belongs to the CTP synthase family. In terms of assembly, homotetramer.

It catalyses the reaction UTP + L-glutamine + ATP + H2O = CTP + L-glutamate + ADP + phosphate + 2 H(+). The enzyme catalyses L-glutamine + H2O = L-glutamate + NH4(+). It carries out the reaction UTP + NH4(+) + ATP = CTP + ADP + phosphate + 2 H(+). It functions in the pathway pyrimidine metabolism; CTP biosynthesis via de novo pathway; CTP from UDP: step 2/2. With respect to regulation, allosterically activated by GTP, when glutamine is the substrate; GTP has no effect on the reaction when ammonia is the substrate. The allosteric effector GTP functions by stabilizing the protein conformation that binds the tetrahedral intermediate(s) formed during glutamine hydrolysis. Inhibited by the product CTP, via allosteric rather than competitive inhibition. Catalyzes the ATP-dependent amination of UTP to CTP with either L-glutamine or ammonia as the source of nitrogen. Regulates intracellular CTP levels through interactions with the four ribonucleotide triphosphates. This Methanocaldococcus jannaschii (strain ATCC 43067 / DSM 2661 / JAL-1 / JCM 10045 / NBRC 100440) (Methanococcus jannaschii) protein is CTP synthase.